Consider the following 335-residue polypeptide: Deoxyhypusine hydroxylase (335 aa).

HEAT-like PBS-type repeat units follow at residues 74–100 (LKHE…VLED), 107–133 (CRHE…LRDD), 203–233 (KRYR…LAEG), 241–267 (FRHE…TLSD), and 274–301 (VRHE…FVND). Residues H76, E77, H109, and E110 each contribute to the Fe cation site. Residues H243, E244, H276, and E277 each coordinate Fe cation.

Belongs to the deoxyhypusine hydroxylase family. Fe(2+) is required as a cofactor.

It is found in the cytoplasm. The protein resides in the nucleus. It catalyses the reaction [eIF5A protein]-deoxyhypusine + AH2 + O2 = [eIF5A protein]-hypusine + A + H2O. The protein operates within protein modification; eIF5A hypusination. Its function is as follows. Catalyzes the hydroxylation of the N(6)-(4-aminobutyl)-L-lysine intermediate to form hypusine, an essential post-translational modification only found in mature eIF-5A factor. The sequence is that of Deoxyhypusine hydroxylase from Coccidioides immitis (strain RS) (Valley fever fungus).